The chain runs to 744 residues: Adenosylcobalamin-dependent ribonucleoside-triphosphate reductase (744 aa).

C120 and C424 are oxidised to a cystine. The effector region-1 stretch occupies residues 148-159 (SMPFSFLFDQLM). The segment at 169 to 318 (VDENINQIPK…ICNLIGKTVV (150 aa)) is effector region-2. Residues C413 and E415 contribute to the active site. The adenosylcobalamin-binding-1 stretch occupies residues 570–631 (FHYSGYLIQR…SDNFASAGTV (62 aa)). The adenosylcobalamin-binding-2 stretch occupies residues 690-729 (LKQAPKEPISKEKYEKADNHITGNVEIVFEQTNEDQKGLE).

Belongs to the class II ribonucleoside-triphosphate reductase family. Monomer. Requires adenosylcob(III)alamin as cofactor.

The catalysed reaction is a 2'-deoxyribonucleoside 5'-triphosphate + [thioredoxin]-disulfide + H2O = a ribonucleoside 5'-triphosphate + [thioredoxin]-dithiol. With respect to regulation, allosterically regulated by ATP and dNTP. In Lactobacillus gasseri (strain ATCC 33323 / DSM 20243 / BCRC 14619 / CIP 102991 / JCM 1131 / KCTC 3163 / NCIMB 11718 / NCTC 13722 / AM63), this protein is Adenosylcobalamin-dependent ribonucleoside-triphosphate reductase (rtpR).